Consider the following 282-residue polypeptide: MEKIFLNGEFVSPSEAKVSYNDRGYVFGDGIYEYIRVYNGKLFTVTEHYERFLRSANEIGLDLNYSVEELIELSRKLVDMNQIETGAIYIQATRGVAERNHSFPTPEVEPAIVAYTKSYDRPYDHLENGVNGVTVEDIRWLRCDIKSLNLLGNVLAKEYAVKYNAVEAIQHRGETVTEGSSSNAYAIKDGVIYTHPINNYILNGITRIVIKKIAEDYNIPFKEETFTVDFLKNADEVIVSSTSAEVTPVIKLDGEPINDGKVGPITRQLQEGFEKYIESHSI.

Tyrosine 32 contributes to the substrate binding site. Arginine 51 contributes to the pyridoxal 5'-phosphate binding site. Positions 99 and 101 each coordinate substrate. The active-site Proton acceptor is the lysine 146. Position 146 is an N6-(pyridoxal phosphate)lysine (lysine 146). Glutamate 178 provides a ligand contact to pyridoxal 5'-phosphate.

This sequence belongs to the class-IV pyridoxal-phosphate-dependent aminotransferase family. As to quaternary structure, homodimer. Requires pyridoxal 5'-phosphate as cofactor.

The catalysed reaction is D-alanine + 2-oxoglutarate = D-glutamate + pyruvate. In terms of biological role, acts on the D-isomers of alanine, leucine, aspartate, glutamate, aminobutyrate, norvaline and asparagine. The enzyme transfers an amino group from a substrate D-amino acid to the pyridoxal phosphate cofactor to form pyridoxamine and an alpha-keto acid in the first half-reaction. The second half-reaction is the reverse of the first, transferring the amino group from the pyridoxamine to a second alpha-keto acid to form the product D-amino acid via a ping-pong mechanism. This is an important process in the formation of D-alanine and D-glutamate, which are essential bacterial cell wall components. The chain is D-alanine aminotransferase (dat) from Staphylococcus aureus (strain N315).